Reading from the N-terminus, the 41-residue chain is Large ribosomal subunit protein bL36 (41 aa).

The protein belongs to the bacterial ribosomal protein bL36 family.

This is Large ribosomal subunit protein bL36 from Dinoroseobacter shibae (strain DSM 16493 / NCIMB 14021 / DFL 12).